Consider the following 470-residue polypeptide: mRNA export factor ICP27 homolog (470 aa).

Disordered stretches follow at residues 1–31 and 73–202; these read MALS…TGGD and FSAS…AGDR. The segment covering 73–85 has biased composition (polar residues); the sequence is FSASPQRAQPSNP. 2 stretches are compositionally biased toward basic residues: residues 94–107 and 178–187; these read HGRR…RRNN and RVHRNRRRGN. The Zn(2+) site is built by cysteine 359, histidine 437, cysteine 441, and cysteine 446. Residues 359–446 form a CHC2-type zinc finger; it reads CYLSSSGSPT…HKRRCKADTC (88 aa).

The protein belongs to the HHV-1 ICP27 protein family. Homodimer. Homodimerization is required for transactivation. Associates in a complex with RNA, and host export factors NXF1/TAP and ALYREF; these interactions allow nuclear export of viral transcripts. Interacts with three host shuttling SR proteins SRSF1, SRSF3 and SRSF7. Interacts with host SRPK1. Interacts with IE62; this interaction enhances IE62 transactivation.

It is found in the host cytoplasm. Its subcellular location is the host nucleus. In terms of biological role, multifunctional regulator of the expression of viral genes that mediates nuclear export of viral intronless mRNAs. This immediate early (EI) protein promotes the nuclear export of viral intronless mRNAs by interacting with mRNAs and host NXF1/TAP. The sequence is that of mRNA export factor ICP27 homolog from Equine herpesvirus 1 (strain Kentucky A) (EHV-1).